Here is a 396-residue protein sequence, read N- to C-terminus: Elongation factor Tu (396 aa).

The tr-type G domain maps to 10 to 206 (KPHCNIGTIG…NVDEYIPQPE (197 aa)). The tract at residues 19–26 (GHVDHGKT) is G1. Position 19-26 (19-26 (GHVDHGKT)) interacts with GTP. Threonine 26 lines the Mg(2+) pocket. Residues 60–64 (GITIS) form a G2 region. Residues 81–84 (DCPG) are G3. GTP contacts are provided by residues 81 to 85 (DCPGH) and 136 to 139 (NKCD). The interval 136-139 (NKCD) is G4. Residues 174–176 (SAL) form a G5 region.

It belongs to the TRAFAC class translation factor GTPase superfamily. Classic translation factor GTPase family. EF-Tu/EF-1A subfamily. As to quaternary structure, monomer.

The protein resides in the cytoplasm. The catalysed reaction is GTP + H2O = GDP + phosphate + H(+). In terms of biological role, GTP hydrolase that promotes the GTP-dependent binding of aminoacyl-tRNA to the A-site of ribosomes during protein biosynthesis. The protein is Elongation factor Tu of Bradyrhizobium diazoefficiens (strain JCM 10833 / BCRC 13528 / IAM 13628 / NBRC 14792 / USDA 110).